A 447-amino-acid polypeptide reads, in one-letter code: Exodeoxyribonuclease 7 large subunit (447 aa).

This sequence belongs to the XseA family. As to quaternary structure, heterooligomer composed of large and small subunits.

It is found in the cytoplasm. The enzyme catalyses Exonucleolytic cleavage in either 5'- to 3'- or 3'- to 5'-direction to yield nucleoside 5'-phosphates.. In terms of biological role, bidirectionally degrades single-stranded DNA into large acid-insoluble oligonucleotides, which are then degraded further into small acid-soluble oligonucleotides. The sequence is that of Exodeoxyribonuclease 7 large subunit from Lactobacillus helveticus (strain DPC 4571).